The sequence spans 259 residues: Transcription factor bHLH125 (259 aa).

In terms of domain architecture, bHLH spans 73–125; that stretch reads SKKMKHRDIERQRRQEVSSLFKRLRTLLPFQYIQGKRSTSDHIVQAVNYIKDL.

In terms of assembly, homodimer.

It is found in the nucleus. In Arabidopsis thaliana (Mouse-ear cress), this protein is Transcription factor bHLH125 (BHLH125).